The chain runs to 165 residues: 2-C-methyl-D-erythritol 2,4-cyclodiphosphate synthase (165 aa).

A divalent metal cation-binding residues include D13 and H15. Residues 13–15 (DRH) and 39–40 (HS) each bind 4-CDP-2-C-methyl-D-erythritol 2-phosphate. Position 47 (H47) interacts with a divalent metal cation. 4-CDP-2-C-methyl-D-erythritol 2-phosphate contacts are provided by residues 61–63 (DIG) and F141.

The protein belongs to the IspF family. In terms of assembly, homotrimer. A divalent metal cation is required as a cofactor.

It catalyses the reaction 4-CDP-2-C-methyl-D-erythritol 2-phosphate = 2-C-methyl-D-erythritol 2,4-cyclic diphosphate + CMP. It participates in isoprenoid biosynthesis; isopentenyl diphosphate biosynthesis via DXP pathway; isopentenyl diphosphate from 1-deoxy-D-xylulose 5-phosphate: step 4/6. Functionally, involved in the biosynthesis of isopentenyl diphosphate (IPP) and dimethylallyl diphosphate (DMAPP), two major building blocks of isoprenoid compounds. Catalyzes the conversion of 4-diphosphocytidyl-2-C-methyl-D-erythritol 2-phosphate (CDP-ME2P) to 2-C-methyl-D-erythritol 2,4-cyclodiphosphate (ME-CPP) with a corresponding release of cytidine 5-monophosphate (CMP). This Thermotoga neapolitana (strain ATCC 49049 / DSM 4359 / NBRC 107923 / NS-E) protein is 2-C-methyl-D-erythritol 2,4-cyclodiphosphate synthase.